A 457-amino-acid polypeptide reads, in one-letter code: Serine/threonine-protein phosphatase 2A regulatory subunit B'' subunit gamma (457 aa).

2 EF-hand domains span residues 276-311 and 344-379; these read PSAL…TLTS and KEPA…IQEQ. Ca(2+) is bound by residues D289, D291, N293, M295, and E300.

It localises to the nucleus. Its subcellular location is the cytoplasm. In terms of biological role, possible role in the regulation of cell death. This chain is Serine/threonine-protein phosphatase 2A regulatory subunit B'' subunit gamma (ppp2r3c), found in Danio rerio (Zebrafish).